Consider the following 352-residue polypeptide: Small ribosomal subunit biogenesis GTPase RsgA 1 (352 aa).

The tract at residues 1–24 (MAKKKKLTQGQVRRVRDNQQKRLK) is disordered. A CP-type G domain is found at 104–272 (TSVLTRPDYY…LIDSPGVREF (169 aa)). Residues 160 to 163 (NKID) and 214 to 222 (GQSGVGKSS) each bind GTP. The Zn(2+) site is built by cysteine 296, cysteine 301, histidine 303, and cysteine 309.

Belongs to the TRAFAC class YlqF/YawG GTPase family. RsgA subfamily. Monomer. Associates with 30S ribosomal subunit, binds 16S rRNA. It depends on Zn(2+) as a cofactor.

The protein localises to the cytoplasm. Functionally, one of several proteins that assist in the late maturation steps of the functional core of the 30S ribosomal subunit. Helps release RbfA from mature subunits. May play a role in the assembly of ribosomal proteins into the subunit. Circularly permuted GTPase that catalyzes slow GTP hydrolysis, GTPase activity is stimulated by the 30S ribosomal subunit. This chain is Small ribosomal subunit biogenesis GTPase RsgA 1, found in Vibrio vulnificus (strain CMCP6).